The sequence spans 440 residues: Tuliposide B-converting enzyme 1, amyloplastic (440 aa).

The transit peptide at 1–58 (MSIVSFCSSLPAGPHGFKHGRGTRDMVHMPCIVRRTARSPAQACRLLRWNKYHCAAVP) directs the protein to the amyloplast. The active-site Acyl-ester intermediate is Ser232. Catalysis depends on charge relay system residues Asp325 and His357.

This sequence belongs to the AB hydrolase superfamily. As to quaternary structure, homodimer. Post-translationally, not glycosylated. In terms of tissue distribution, expressed in the pollen grains.

It is found in the plastid. The protein resides in the amyloplast. It carries out the reaction 6-tuliposide B = tulipalin B + D-glucose. Its activity is regulated as follows. Inhibited by Ag(+), Cu(2+), Fe(2+), Hg(2+), V(3+) and phenylmethylsulfonyl fluoride (PMSF). Lactone-forming carboxylesterase, specifically catalyzing intramolecular transesterification, but not hydrolysis. Involved in the biosynthesis of tulipalins, defensive chemicals that show antimicrobial activities against a broad range of strains of bacteria and fungi. Substrates are 6-tuliposide B &gt; 6-tuliposide A. The protein is Tuliposide B-converting enzyme 1, amyloplastic of Tulipa gesneriana (Garden tulip).